Consider the following 272-residue polypeptide: Small ribosomal subunit protein mS23 (272 aa).

The disordered stretch occupies residues 233-272 (KENASKAAGDASAVSSEKQVEDDVVNFDESTDADQEVLHF). Over residues 252–272 (VEDDVVNFDESTDADQEVLHF) the composition is skewed to acidic residues.

This sequence belongs to the mitochondrion-specific ribosomal protein mS23 family. Component of the mitochondrial small ribosomal subunit.

The protein localises to the mitochondrion. In Candida glabrata (strain ATCC 2001 / BCRC 20586 / JCM 3761 / NBRC 0622 / NRRL Y-65 / CBS 138) (Yeast), this protein is Small ribosomal subunit protein mS23 (RSM25).